The primary structure comprises 354 residues: 3-dehydroquinate synthase (354 aa).

NAD(+) contacts are provided by residues 66 to 71 (DGERYK), 100 to 104 (GVVGD), 124 to 125 (TT), K137, and K146. Positions 179, 242, and 259 each coordinate Zn(2+).

It belongs to the sugar phosphate cyclases superfamily. Dehydroquinate synthase family. Requires Co(2+) as cofactor. Zn(2+) serves as cofactor. It depends on NAD(+) as a cofactor.

It is found in the cytoplasm. It catalyses the reaction 7-phospho-2-dehydro-3-deoxy-D-arabino-heptonate = 3-dehydroquinate + phosphate. Its pathway is metabolic intermediate biosynthesis; chorismate biosynthesis; chorismate from D-erythrose 4-phosphate and phosphoenolpyruvate: step 2/7. Functionally, catalyzes the conversion of 3-deoxy-D-arabino-heptulosonate 7-phosphate (DAHP) to dehydroquinate (DHQ). The sequence is that of 3-dehydroquinate synthase from Halorhodospira halophila (strain DSM 244 / SL1) (Ectothiorhodospira halophila (strain DSM 244 / SL1)).